A 262-amino-acid chain; its full sequence is 14-3-3 protein epsilon (262 aa).

Residues 236–262 (QAEEVDPNAGDGEPKEQIQDVEDQDVS) form a disordered region. Serine 262 bears the Phosphoserine mark.

This sequence belongs to the 14-3-3 family. As to quaternary structure, homodimer. Interacts with phosphorylated yki. Interacts with pav (when serine phosphorylated); the interaction is necessary for association of the complex pav-14-3-3epsilon complex to the microtubules, thereby inhibiting microtubule sliding.

Functionally, positively regulates Ras-mediated pathways. Acts downstream or parallel to Raf, but upstream of nuclear factors in Ras signaling. Three mutants have been isolated, that suppress the rough eye phenotype caused by mutated Ras1 (sev-Ras1 v12). Inhibits yki activity by restricting its nuclear localization. Together with pav, has a role in the inhibition of microtubule sliding during neurite outgrowth. The chain is 14-3-3 protein epsilon (14-3-3epsilon) from Drosophila melanogaster (Fruit fly).